Reading from the N-terminus, the 73-residue chain is Small ribosomal subunit protein bS18c (73 aa).

The protein belongs to the bacterial ribosomal protein bS18 family. Part of the 30S ribosomal subunit.

The protein localises to the plastid. It is found in the chloroplast. This chain is Small ribosomal subunit protein bS18c, found in Nephroselmis olivacea (Green alga).